The following is a 446-amino-acid chain: Alpha-1,6-mannosyl-glycoprotein 2-beta-N-acetylglucosaminyltransferase (446 aa).

The Cytoplasmic segment spans residues 1-9 (MRFRIYKRK). Residues 10 to 29 (VLILTFVVAACGFVLWSSNG) traverse the membrane as a helical; Signal-anchor for type II membrane protein segment. Topologically, residues 30–446 (RQRKNEALAP…ELCKSYRRLQ (417 aa)) are lumenal. Residues N69 and N86 are each glycosylated (N-linked (GlcNAc...) asparagine). Residues 123–127 (QVHNR) and D154 each bind substrate. Residues C196 and C210 are joined by a disulfide bond. 229 to 233 (QTKHH) contacts substrate. Position 261 (D261) interacts with Mn(2+). C283 and C286 form a disulfide bridge. R298 provides a ligand contact to substrate. 3 disulfide bridges follow: C334–C357, C339–C439, and C378–C386. Residue H374 participates in Mn(2+) binding.

This sequence belongs to the glycosyltransferase 16 (GT16) protein family. As to quaternary structure, homodimer. It depends on Mn(2+) as a cofactor.

It is found in the golgi apparatus membrane. It catalyses the reaction an N(4)-{beta-D-GlcNAc-(1-&gt;2)-alpha-D-Man-(1-&gt;3)-[alpha-D-Man-(1-&gt;6)]-beta-D-Man-(1-&gt;4)-beta-D-GlcNAc-(1-&gt;4)-beta-D-GlcNAc}-L-asparaginyl-[protein] + UDP-N-acetyl-alpha-D-glucosamine = N(4)-{beta-D-GlcNAc-(1-&gt;2)-alpha-D-Man-(1-&gt;3)-[beta-D-GlcNAc-(1-&gt;2)-alpha-D-Man-(1-&gt;6)]-beta-D-Man-(1-&gt;4)-beta-D-GlcNAc-(1-&gt;4)-beta-D-GlcNAc}-L-asparaginyl-[protein] + UDP + H(+). Its pathway is protein modification; protein glycosylation. In terms of biological role, plays an essential role in protein N-glycosylation. Catalyzes the transfer of N-acetylglucosamine (GlcNAc) onto the free terminal mannose moiety in the core structure of the nascent N-linked glycan chain, giving rise to the second branch in complex glycans. The chain is Alpha-1,6-mannosyl-glycoprotein 2-beta-N-acetylglucosaminyltransferase (MGAT2) from Sus scrofa (Pig).